The primary structure comprises 405 residues: L-rhamnonate dehydratase (405 aa).

Positions 33 and 59 each coordinate substrate. Mg(2+)-binding residues include Asp226, Glu252, and Glu280. His329 serves as the catalytic Proton acceptor. Glu349 is a substrate binding site.

It belongs to the mandelate racemase/muconate lactonizing enzyme family. RhamD subfamily. As to quaternary structure, homooctamer; tetramer of dimers. Mg(2+) serves as cofactor.

It carries out the reaction L-rhamnonate = 2-dehydro-3-deoxy-L-rhamnonate + H2O. Functionally, catalyzes the dehydration of L-rhamnonate to 2-keto-3-deoxy-L-rhamnonate (KDR). This Escherichia coli O45:K1 (strain S88 / ExPEC) protein is L-rhamnonate dehydratase.